Consider the following 119-residue polypeptide: Large ribosomal subunit protein bL20 (119 aa).

Belongs to the bacterial ribosomal protein bL20 family.

In terms of biological role, binds directly to 23S ribosomal RNA and is necessary for the in vitro assembly process of the 50S ribosomal subunit. It is not involved in the protein synthesizing functions of that subunit. The chain is Large ribosomal subunit protein bL20 from Streptococcus equi subsp. equi (strain 4047).